The primary structure comprises 280 residues: Large ribosomal subunit protein uL2 (280 aa).

Disordered regions lie at residues 27 to 58 (STPE…GGGH) and 226 to 280 (MNPV…KHGR). Basic residues-rich tracts occupy residues 37-58 (LHGH…GGGH) and 268-280 (IVRR…KHGR).

The protein belongs to the universal ribosomal protein uL2 family. In terms of assembly, part of the 50S ribosomal subunit. Forms a bridge to the 30S subunit in the 70S ribosome.

Functionally, one of the primary rRNA binding proteins. Required for association of the 30S and 50S subunits to form the 70S ribosome, for tRNA binding and peptide bond formation. It has been suggested to have peptidyltransferase activity; this is somewhat controversial. Makes several contacts with the 16S rRNA in the 70S ribosome. The sequence is that of Large ribosomal subunit protein uL2 from Mycobacterium marinum (strain ATCC BAA-535 / M).